Consider the following 330-residue polypeptide: MELLSTPHSIEVSNITCDSFRISWTMENSDLERVTHYFIDLNKKENKNSNKFKHRDVPTKLVAKAVPLPMTVRGHWFLSPRTEYSVAVQTAVKQSDGEYLVSGWSETVEFCTGDYAKEHLAQLQEKAEQIAGRMLRFSVFYRNHHKEYFQHARTHCGNMLQPYLKDNSGSHGSPTSGMLHGVFFSCNTEFNTGQPPQDSPYGRWRFQIPAQRLFNPSTNLYFADFYCMYTAYHYAILVLAPKGSLGDRFCRDRLPLLDIACNKFLTCSVEDGELVFRHAQDLILEIIYTEPVDLSLGTLGEISGHQLMSLSTADAKKDPSCKTCNISVGR.

One can recognise a Fibronectin type-III domain in the interval 6–115 (TPHSIEVSNI…ETVEFCTGDY (110 aa)). N-linked (GlcNAc...) asparagine glycosylation is found at Asn-14 and Asn-325.

The protein belongs to the PHYHIP family. In terms of assembly, interacts with PHYH and ADGRB1.

Its interaction with PHYH suggests a role in the development of the central system. This chain is Phytanoyl-CoA hydroxylase-interacting protein (PHYHIP), found in Bos taurus (Bovine).